Reading from the N-terminus, the 403-residue chain is S-adenosylmethionine synthase (403 aa).

H22 is an ATP binding site. D24 contacts Mg(2+). E50 is a binding site for K(+). L-methionine-binding residues include E63 and Q107. A flexible loop region spans residues 107–117 (QSPDIAMGVDK). ATP is bound by residues 182–184 (DAK), 248–249 (RF), D257, 263–264 (RK), A280, and K284. D257 contacts L-methionine. K288 contacts L-methionine.

It belongs to the AdoMet synthase family. As to quaternary structure, homotetramer; dimer of dimers. Requires Mg(2+) as cofactor. K(+) is required as a cofactor.

It is found in the cytoplasm. The catalysed reaction is L-methionine + ATP + H2O = S-adenosyl-L-methionine + phosphate + diphosphate. It participates in amino-acid biosynthesis; S-adenosyl-L-methionine biosynthesis; S-adenosyl-L-methionine from L-methionine: step 1/1. Its function is as follows. Catalyzes the formation of S-adenosylmethionine (AdoMet) from methionine and ATP. The overall synthetic reaction is composed of two sequential steps, AdoMet formation and the subsequent tripolyphosphate hydrolysis which occurs prior to release of AdoMet from the enzyme. This Chloroflexus aurantiacus (strain ATCC 29366 / DSM 635 / J-10-fl) protein is S-adenosylmethionine synthase.